We begin with the raw amino-acid sequence, 212 residues long: Ribosomal RNA large subunit methyltransferase E (212 aa).

Positions 57, 59, 77, 93, and 122 each coordinate S-adenosyl-L-methionine. Residue Lys162 is the Proton acceptor of the active site.

It belongs to the class I-like SAM-binding methyltransferase superfamily. RNA methyltransferase RlmE family.

The protein resides in the cytoplasm. It carries out the reaction uridine(2552) in 23S rRNA + S-adenosyl-L-methionine = 2'-O-methyluridine(2552) in 23S rRNA + S-adenosyl-L-homocysteine + H(+). Specifically methylates the uridine in position 2552 of 23S rRNA at the 2'-O position of the ribose in the fully assembled 50S ribosomal subunit. The polypeptide is Ribosomal RNA large subunit methyltransferase E (Coxiella burnetii (strain RSA 493 / Nine Mile phase I)).